The primary structure comprises 483 residues: Glutamyl-tRNA(Gln) amidotransferase subunit A (483 aa).

Active-site charge relay system residues include Lys75 and Ser150. The active-site Acyl-ester intermediate is the Ser174.

The protein belongs to the amidase family. GatA subfamily. As to quaternary structure, heterotrimer of A, B and C subunits.

It catalyses the reaction L-glutamyl-tRNA(Gln) + L-glutamine + ATP + H2O = L-glutaminyl-tRNA(Gln) + L-glutamate + ADP + phosphate + H(+). In terms of biological role, allows the formation of correctly charged Gln-tRNA(Gln) through the transamidation of misacylated Glu-tRNA(Gln) in organisms which lack glutaminyl-tRNA synthetase. The reaction takes place in the presence of glutamine and ATP through an activated gamma-phospho-Glu-tRNA(Gln). The polypeptide is Glutamyl-tRNA(Gln) amidotransferase subunit A (Microcystis aeruginosa (strain NIES-843 / IAM M-2473)).